We begin with the raw amino-acid sequence, 842 residues long: Xyloglucanase Xgh74A (842 aa).

Positions 1 to 32 (MVKKFTSKIKAAVFAAVVAATAIFGPAISSQA) are cleaved as a signal peptide. The active-site Nucleophile is Asp-70. BNR repeat units lie at residues 134–144 (RSTDRGETWEK), 185–196 (WRSTDYGVTWSK), 252–262 (YRSTDGGVTWK), and 358–368 (FRSTDGGATWK). Asp-480 serves as the catalytic Proton donor. BNR repeat units lie at residues 533-541 (FSYDGGRNW), 577-586 (VTTDNGNSWK), 616-626 (YISTDGGLTFT), 660-671 (WRSTDGGYTFEK), and 708-718 (FRSDDAGKTWV). The 71-residue stretch at 771 to 841 (DKGLVGDLNG…LLQAIPELPK (71 aa)) folds into the Dockerin domain.

The protein belongs to the glycosyl hydrolase 74 family.

Functionally, hydrolyzes the glucosidic bonds of unbranched Glc residues in tamarind seed xyloglucan, producing XXXG, XLXG, XXLG and XLLG. Has low activity on carboxymethylcellulose, lichenan,hydroxyethylcellulose and glucuronoxylan, and no activity on xylan, polygalaturonic acid, wheat arabinoxylan, rhamnogalacturan, curdlan, laminarin, galactomannan, galactan, arabinan and pachyman or amorphous cellulose. The chain is Xyloglucanase Xgh74A from Acetivibrio thermocellus (Hungateiclostridium thermocellum).